We begin with the raw amino-acid sequence, 386 residues long: Glucose-1-phosphate adenylyltransferase (386 aa).

Alpha-D-glucose 1-phosphate contacts are provided by residues Tyr99, Gly164, 179–180, and Ser190; that span reads EK.

Belongs to the bacterial/plant glucose-1-phosphate adenylyltransferase family. In terms of assembly, homotetramer.

It carries out the reaction alpha-D-glucose 1-phosphate + ATP + H(+) = ADP-alpha-D-glucose + diphosphate. Its pathway is glycan biosynthesis; glycogen biosynthesis. In terms of biological role, involved in the biosynthesis of ADP-glucose, a building block required for the elongation reactions to produce glycogen. Catalyzes the reaction between ATP and alpha-D-glucose 1-phosphate (G1P) to produce pyrophosphate and ADP-Glc. This chain is Glucose-1-phosphate adenylyltransferase, found in Clostridioides difficile (strain 630) (Peptoclostridium difficile).